Consider the following 116-residue polypeptide: DNA-directed RNA polymerase subunit omega (116 aa).

It belongs to the RNA polymerase subunit omega family. In terms of assembly, the RNAP catalytic core consists of 2 alpha, 1 beta, 1 beta' and 1 omega subunit. When a sigma factor is associated with the core the holoenzyme is formed, which can initiate transcription.

The enzyme catalyses RNA(n) + a ribonucleoside 5'-triphosphate = RNA(n+1) + diphosphate. Its function is as follows. Promotes RNA polymerase assembly. Latches the N- and C-terminal regions of the beta' subunit thereby facilitating its interaction with the beta and alpha subunits. In Hyphomonas neptunium (strain ATCC 15444), this protein is DNA-directed RNA polymerase subunit omega.